A 246-amino-acid polypeptide reads, in one-letter code: tRNA (guanine-N(7)-)-methyltransferase (246 aa).

Residues 1 to 26 form a disordered region; sequence MIENPSPSAANLPEHPSTDASHPRNI. 4 residues coordinate S-adenosyl-L-methionine: E75, E100, D127, and D150. The active site involves D150. K154 is a substrate binding site. Residues 156–161 are interaction with RNA; sequence KHNKRR. Substrate contacts are provided by residues D186 and 225–228; that span reads TKFE.

Belongs to the class I-like SAM-binding methyltransferase superfamily. TrmB family.

It carries out the reaction guanosine(46) in tRNA + S-adenosyl-L-methionine = N(7)-methylguanosine(46) in tRNA + S-adenosyl-L-homocysteine. The protein operates within tRNA modification; N(7)-methylguanine-tRNA biosynthesis. Functionally, catalyzes the formation of N(7)-methylguanine at position 46 (m7G46) in tRNA. In Polaromonas sp. (strain JS666 / ATCC BAA-500), this protein is tRNA (guanine-N(7)-)-methyltransferase.